Consider the following 601-residue polypeptide: Probable Xaa-Pro aminopeptidase P (601 aa).

The Mn(2+) site is built by Asp398, Asp409, Glu507, and Glu521.

This sequence belongs to the peptidase M24B family. The cofactor is Mn(2+).

It catalyses the reaction Release of any N-terminal amino acid, including proline, that is linked to proline, even from a dipeptide or tripeptide.. Functionally, catalyzes the removal of a penultimate prolyl residue from the N-termini of peptides. This chain is Probable Xaa-Pro aminopeptidase P (ampp), found in Sclerotinia sclerotiorum (strain ATCC 18683 / 1980 / Ss-1) (White mold).